The primary structure comprises 148 residues: MFDVTLLILLGLAALGFISHNTTVAVSILVLIIVRVTPLSTFFPWIEKQGLSIGIIILTIGIMAPIASGTLPPSTLIHSFLNWKSLVAIAVGVIVSWLGGRGVTLMGSQPQLVAGLLVGTVLGVALFRGVPVGPLIAAGLVSLIVGKQ.

The next 4 membrane-spanning stretches (helical) occupy residues 14 to 34 (ALGF…LIIV), 51 to 71 (LSIG…SGTL), 86 to 106 (LVAI…VTLM), and 121 to 141 (VLGV…AGLV).

Belongs to the UPF0756 family.

The protein resides in the cell membrane. The chain is UPF0756 membrane protein YeaL from Escherichia coli O127:H6 (strain E2348/69 / EPEC).